The primary structure comprises 295 residues: Ethanolamine ammonia-lyase small subunit (295 aa).

Positions 207, 228, and 258 each coordinate adenosylcob(III)alamin.

Belongs to the EutC family. In terms of assembly, the basic unit is a heterodimer which dimerizes to form tetramers. The heterotetramers trimerize; 6 large subunits form a core ring with 6 small subunits projecting outwards. It depends on adenosylcob(III)alamin as a cofactor.

Its subcellular location is the bacterial microcompartment. It carries out the reaction ethanolamine = acetaldehyde + NH4(+). Its pathway is amine and polyamine degradation; ethanolamine degradation. Catalyzes the deamination of various vicinal amino-alcohols to oxo compounds. Allows this organism to utilize ethanolamine as the sole source of nitrogen and carbon in the presence of external vitamin B12. The chain is Ethanolamine ammonia-lyase small subunit from Escherichia coli O81 (strain ED1a).